We begin with the raw amino-acid sequence, 260 residues long: MFDIGVNLTSSQFEQDREQVVIRAKQAGVSGILITGTNAQESHQAMLLAQAYPDYCWSTAGVHPHDASQWNGDIAEQVHHMANAACVVAIGECGLDFNRNFSTPEEQERAFSAQLAIAAELSMPVFLHCRDAHPRFISLLTPWLGQLPAAVVHCFTGNRQELDACLAVGLTIGITGWVCDERRGLELRALLPHIPADRLLVETDAPYLLPRDLRPKPASRRNEPCYLPHIIRQIAEWRGEDATWLGQITDENARRIFRLA.

A divalent metal cation-binding residues include Glu92, His128, and His153.

It belongs to the metallo-dependent hydrolases superfamily. TatD-type hydrolase family. TatD subfamily. Monomer. Mg(2+) serves as cofactor.

It localises to the cytoplasm. Its function is as follows. 3'-5' exonuclease that prefers single-stranded DNA and RNA. May play a role in the H(2)O(2)-induced DNA damage repair. In Pectobacterium parmentieri (strain WPP163) (Pectobacterium wasabiae (strain WPP163)), this protein is 3'-5' ssDNA/RNA exonuclease TatD.